A 277-amino-acid chain; its full sequence is 3-methyl-2-oxobutanoate hydroxymethyltransferase (277 aa).

Mg(2+) contacts are provided by D53 and D96. 3-methyl-2-oxobutanoate is bound by residues 53–54 (DS), D96, and K126. E128 serves as a coordination point for Mg(2+). E195 (proton acceptor) is an active-site residue.

This sequence belongs to the PanB family. Homodecamer; pentamer of dimers. It depends on Mg(2+) as a cofactor.

Its subcellular location is the cytoplasm. It carries out the reaction 3-methyl-2-oxobutanoate + (6R)-5,10-methylene-5,6,7,8-tetrahydrofolate + H2O = 2-dehydropantoate + (6S)-5,6,7,8-tetrahydrofolate. It participates in cofactor biosynthesis; (R)-pantothenate biosynthesis; (R)-pantoate from 3-methyl-2-oxobutanoate: step 1/2. Catalyzes the reversible reaction in which hydroxymethyl group from 5,10-methylenetetrahydrofolate is transferred onto alpha-ketoisovalerate to form ketopantoate. This is 3-methyl-2-oxobutanoate hydroxymethyltransferase from Chlorobaculum parvum (strain DSM 263 / NCIMB 8327) (Chlorobium vibrioforme subsp. thiosulfatophilum).